We begin with the raw amino-acid sequence, 369 residues long: Ferredoxin--NADP reductase 2 (369 aa).

Positions 1 to 21 (MDLSIPNPVADATRQVEGGSP) are disordered. FAD is bound by residues aspartate 58, glutamine 66, tyrosine 71, valine 111, phenylalanine 146, aspartate 311, and threonine 352.

It belongs to the ferredoxin--NADP reductase type 2 family. Homodimer. FAD serves as cofactor.

The catalysed reaction is 2 reduced [2Fe-2S]-[ferredoxin] + NADP(+) + H(+) = 2 oxidized [2Fe-2S]-[ferredoxin] + NADPH. The chain is Ferredoxin--NADP reductase 2 from Cupriavidus taiwanensis (strain DSM 17343 / BCRC 17206 / CCUG 44338 / CIP 107171 / LMG 19424 / R1) (Ralstonia taiwanensis (strain LMG 19424)).